A 488-amino-acid chain; its full sequence is MKYSDLRDFLRALEARGELKRIQTPVSPILEMTEICDRTLRRSGPALLFEKPIGFDMPVLGNLFGTPQRVAFGMGAEDVSELREIGRLLALLKEPEPPKGLKDAWDKLPLFKKVLSMAPKVLKDAPCQEVILEGEDVDLGRLPVQHCWPGDAAPLITWGLTITRGPNKERQNLGIYRQQVLGRNKVIMRWLSHRGGALDYREWCQKHPDRPYPVAVALGADPATILGAVTPVPDTLSEYAFAGLLRGQRTELVKAVGSDLQVPASAEIVLEGHIHPGEMADEGPYGDHTGYYNEVDRFPVFTIERITRRRDAIYHSTYTGRPPDEPAVLGVALNEVFVPILQKQFPEIVDFYLPPEGCSYRMAVVTIRKQYPGHAKRVMLGVWSFLRQFMYTKFVIVTDDDIDARDWNDVIWAITTRMDPKRDTVLIDNTPIDYLDFASPVSGLGSKMGLDATHKWPGETSREWGRAIRQDPAVKQRVDELWPLLGLD.

Residue N172 participates in Mn(2+) binding. Residues 175–177, 189–191, and 194–195 contribute to the prenylated FMN site; these read IYR, RWL, and RG. E238 is a Mn(2+) binding site. The active-site Proton donor is the D287.

The protein belongs to the UbiD family. In terms of assembly, homohexamer. Prenylated FMN is required as a cofactor. Mn(2+) serves as cofactor.

The protein resides in the cell membrane. It catalyses the reaction a 4-hydroxy-3-(all-trans-polyprenyl)benzoate + H(+) = a 2-(all-trans-polyprenyl)phenol + CO2. It participates in cofactor biosynthesis; ubiquinone biosynthesis. Its function is as follows. Catalyzes the decarboxylation of 3-octaprenyl-4-hydroxy benzoate to 2-octaprenylphenol, an intermediate step in ubiquinone biosynthesis. The chain is 3-octaprenyl-4-hydroxybenzoate carboxy-lyase from Azotobacter vinelandii (strain DJ / ATCC BAA-1303).